Here is a 346-residue protein sequence, read N- to C-terminus: 3-isopropylmalate dehydrogenase (346 aa).

76 to 87 (GPKWTDPNNRPE) is an NAD(+) binding site. Substrate-binding residues include R94, R104, R132, and D217. Residues D217, D241, and D245 each contribute to the Mg(2+) site. Position 275–287 (275–287 (GSAPDIANQDIAN)) interacts with NAD(+).

It belongs to the isocitrate and isopropylmalate dehydrogenases family. LeuB type 1 subfamily. Homodimer. Mg(2+) serves as cofactor. Mn(2+) is required as a cofactor.

It is found in the cytoplasm. The catalysed reaction is (2R,3S)-3-isopropylmalate + NAD(+) = 4-methyl-2-oxopentanoate + CO2 + NADH. It participates in amino-acid biosynthesis; L-leucine biosynthesis; L-leucine from 3-methyl-2-oxobutanoate: step 3/4. Its function is as follows. Catalyzes the oxidation of 3-carboxy-2-hydroxy-4-methylpentanoate (3-isopropylmalate) to 3-carboxy-4-methyl-2-oxopentanoate. The product decarboxylates to 4-methyl-2 oxopentanoate. This is 3-isopropylmalate dehydrogenase from Staphylococcus saprophyticus subsp. saprophyticus (strain ATCC 15305 / DSM 20229 / NCIMB 8711 / NCTC 7292 / S-41).